The sequence spans 616 residues: Chaperone protein DnaK (616 aa).

Position 174 is a phosphothreonine; by autocatalysis (threonine 174). The interval 575–616 (QQTQGAQSDPGAAGFGGQQEAPGAGQDENVVDADYKVVDDDK) is disordered. The span at 607–616 (ADYKVVDDDK) shows a compositional bias: basic and acidic residues.

The protein belongs to the heat shock protein 70 family.

Acts as a chaperone. The protein is Chaperone protein DnaK of Ruminiclostridium cellulolyticum (strain ATCC 35319 / DSM 5812 / JCM 6584 / H10) (Clostridium cellulolyticum).